A 358-amino-acid polypeptide reads, in one-letter code: MSSPAIGQPPIPPTPTDANISGKTVIVTGGNSGLGYEAARQFLTLGASRMILACRSIARGQEAASALRAHPTVKETNPNAVIDAFELDLDDYYSGLCFSNRVNAEVKELDILLNNGGQVVMGYEKSKSGHERSMQVNCYTHLLISLELFPLLRSTSAARGVPSRITFTGSATQIMQNTLSKQPISSESTVLGHFDDEANFNKLYRYADSKTVVNAYVRRLAALAPSEVIVNNACPGLVQTGIDKNLPFYLKLPMGLLRKSTGRTVEEGARTLIYVAVVAGTETNGKFLQHNQVDPLASTYTFAFPCYMERRPPECFSVSLEHGSKAQESLLAWNTSILRSFHGGGSAWRNTFNLALTI.

The tract at residues 1-22 (MSSPAIGQPPIPPTPTDANISG) is disordered. 7 residues coordinate NADP(+): L34, D88, N115, Y206, K210, V238, and T240. Y206 functions as the Proton donor in the catalytic mechanism. The active-site Lowers pKa of active site Tyr is K210.

The protein belongs to the short-chain dehydrogenases/reductases (SDR) family.

Its pathway is secondary metabolite biosynthesis. Its function is as follows. Short chain dehydrogenase; part of the SOR gene cluster that mediates the biosynthesis of sorbicillinoids, a diverse group of yellow secondary metabolites that restrict growth of competing pathogenic fungi but not of bacteria. Sorbicillinoids biosynthesis requires the action of two PKSs. The SOR cluster is required for the production of trichodimerol and dihydrotrichotetronin, with sor2 being sufficient for production of trichodimerol, but not dihydrotrichotetronin in the light. Sor1 iteratively combines three acetyl units and the growing chain is modified by the ketoacyl reductase subunit, and optional by the enoyl reductase subunit in the second cycle. The polyketide is then handed over to the PKS sor2, which adds three more acetyl units, and two methyl groups. Sor2 releases an aldehyde, which undergoes spontaneous cyclization resulting in the formation of sorbicillin or 2',3'-dihydrosorbicillin. The monooxygenase sor5 oxidizes sorbicillin and 2',3'-dihydrosorbicillin to 2',3'-dihydrosorbicillinol and sorbicillinol, respectively. The oxidoreductase sor8 further converts sorbicillinol into oxosorbicillinol. Sorbicillinol is the building block for the other sorbicillinoids such as disorbicillinol, bisvertinolon, dihydrobisvertinolone, and dihydrotrichotetronine. This chain is Short chain dehydrogenase sor7, found in Hypocrea jecorina (strain QM6a) (Trichoderma reesei).